Consider the following 250-residue polypeptide: 3-deoxy-manno-octulosonate cytidylyltransferase (250 aa).

This sequence belongs to the KdsB family.

Its subcellular location is the cytoplasm. It carries out the reaction 3-deoxy-alpha-D-manno-oct-2-ulosonate + CTP = CMP-3-deoxy-beta-D-manno-octulosonate + diphosphate. It functions in the pathway nucleotide-sugar biosynthesis; CMP-3-deoxy-D-manno-octulosonate biosynthesis; CMP-3-deoxy-D-manno-octulosonate from 3-deoxy-D-manno-octulosonate and CTP: step 1/1. Its pathway is bacterial outer membrane biogenesis; lipopolysaccharide biosynthesis. Functionally, activates KDO (a required 8-carbon sugar) for incorporation into bacterial lipopolysaccharide in Gram-negative bacteria. The sequence is that of 3-deoxy-manno-octulosonate cytidylyltransferase from Pectobacterium carotovorum subsp. carotovorum (strain PC1).